The following is a 237-amino-acid chain: Ribonuclease PH (237 aa).

Phosphate is bound by residues Arg-86 and 124 to 126 (GTR).

Belongs to the RNase PH family. Homohexameric ring arranged as a trimer of dimers.

It catalyses the reaction tRNA(n+1) + phosphate = tRNA(n) + a ribonucleoside 5'-diphosphate. Its function is as follows. Phosphorolytic 3'-5' exoribonuclease that plays an important role in tRNA 3'-end maturation. Removes nucleotide residues following the 3'-CCA terminus of tRNAs; can also add nucleotides to the ends of RNA molecules by using nucleoside diphosphates as substrates, but this may not be physiologically important. Probably plays a role in initiation of 16S rRNA degradation (leading to ribosome degradation) during starvation. The chain is Ribonuclease PH from Cereibacter sphaeroides (strain KD131 / KCTC 12085) (Rhodobacter sphaeroides).